Consider the following 455-residue polypeptide: Protein YmfN (455 aa).

It belongs to the phage terminase family.

The polypeptide is Protein YmfN (ymfN) (Escherichia coli (strain K12)).